We begin with the raw amino-acid sequence, 462 residues long: tRNA modification GTPase MnmE (462 aa).

Arg23, Glu88, and Arg127 together coordinate (6S)-5-formyl-5,6,7,8-tetrahydrofolate. In terms of domain architecture, TrmE-type G spans 224-383 (GLATVIIGRP…LEKAIADLFF (160 aa)). Asn234 serves as a coordination point for K(+). GTP contacts are provided by residues 234–239 (NVGKSS), 253–259 (TDIPGTT), and 278–281 (DTAG). Residue Ser238 participates in Mg(2+) binding. K(+) is bound by residues Thr253, Ile255, and Thr258. A Mg(2+)-binding site is contributed by Thr259. Lys462 serves as a coordination point for (6S)-5-formyl-5,6,7,8-tetrahydrofolate.

It belongs to the TRAFAC class TrmE-Era-EngA-EngB-Septin-like GTPase superfamily. TrmE GTPase family. In terms of assembly, homodimer. Heterotetramer of two MnmE and two MnmG subunits. K(+) serves as cofactor.

The protein localises to the cytoplasm. Exhibits a very high intrinsic GTPase hydrolysis rate. Involved in the addition of a carboxymethylaminomethyl (cmnm) group at the wobble position (U34) of certain tRNAs, forming tRNA-cmnm(5)s(2)U34. The chain is tRNA modification GTPase MnmE from Geobacillus thermodenitrificans (strain NG80-2).